The sequence spans 214 residues: Cytochrome b (214 aa).

4 helical membrane passes run 31 to 51, 75 to 96, 111 to 131, and 176 to 196; these read FGSM…FLAI, WIMQ…YIHI, WLSG…GYVL, and FFAL…IHII. Heme b is bound by residues histidine 81 and histidine 95. Heme b contacts are provided by histidine 180 and histidine 194. Residue histidine 199 participates in a ubiquinone binding.

It belongs to the cytochrome b family. The cytochrome bc1 complex contains 3 respiratory subunits (MT-CYB, CYC1 and UQCRFS1), 2 core proteins (UQCRC1 and UQCRC2) and probably 6 low-molecular weight proteins. It depends on heme b as a cofactor.

The protein resides in the mitochondrion inner membrane. Functionally, component of the ubiquinol-cytochrome c reductase complex (complex III or cytochrome b-c1 complex) that is part of the mitochondrial respiratory chain. The b-c1 complex mediates electron transfer from ubiquinol to cytochrome c. Contributes to the generation of a proton gradient across the mitochondrial membrane that is then used for ATP synthesis. The polypeptide is Cytochrome b (MT-CYB) (Atractaspis micropholis (Mole viper)).